A 190-amino-acid polypeptide reads, in one-letter code: Putative glutathione-dependent formaldehyde-activating enzyme (190 aa).

A CENP-V/GFA domain is found at 19-165; that stretch reads FKGGKLYCHC…FRKVGLQPYD (147 aa). Positions 26, 28, 47, 49, 52, 94, and 97 each coordinate Zn(2+).

The protein belongs to the Gfa family. Zn(2+) is required as a cofactor.

The catalysed reaction is S-(hydroxymethyl)glutathione = glutathione + formaldehyde. It functions in the pathway one-carbon metabolism; formaldehyde degradation; formate from formaldehyde (glutathione route): step 1/3. Functionally, catalyzes the condensation of formaldehyde and glutathione to S-hydroxymethylglutathione. The sequence is that of Putative glutathione-dependent formaldehyde-activating enzyme from Pyrenophora teres f. teres (strain 0-1) (Barley net blotch fungus).